We begin with the raw amino-acid sequence, 460 residues long: Bifunctional protein GlmU (460 aa).

The tract at residues 1 to 233 is pyrophosphorylase; it reads MLDIVIMAAG…ETEVLGVNSP (233 aa). Residues Lys-21, Gln-76, and 81 to 82 each bind UDP-N-acetyl-alpha-D-glucosamine; that span reads GT. Asp-105 contributes to the Mg(2+) binding site. Residues Gly-140, Glu-158, and Asn-231 each contribute to the UDP-N-acetyl-alpha-D-glucosamine site. Asn-231 contributes to the Mg(2+) binding site. The interval 234–254 is linker; sequence LQLADLERRLQRKQAEALLEA. Positions 255–460 are N-acetyltransferase; it reads GVRLADPARF…AGWQRPQKKR (206 aa). Positions 337 and 355 each coordinate UDP-N-acetyl-alpha-D-glucosamine. His-367 (proton acceptor) is an active-site residue. 2 residues coordinate UDP-N-acetyl-alpha-D-glucosamine: Tyr-370 and Asn-381. Residues Ala-384, 390 to 391, Ser-409, Gly-427, and Arg-444 contribute to the acetyl-CoA site; that span reads NY.

The protein in the N-terminal section; belongs to the N-acetylglucosamine-1-phosphate uridyltransferase family. This sequence in the C-terminal section; belongs to the transferase hexapeptide repeat family. As to quaternary structure, homotrimer. It depends on Mg(2+) as a cofactor.

The protein resides in the cytoplasm. It catalyses the reaction alpha-D-glucosamine 1-phosphate + acetyl-CoA = N-acetyl-alpha-D-glucosamine 1-phosphate + CoA + H(+). The catalysed reaction is N-acetyl-alpha-D-glucosamine 1-phosphate + UTP + H(+) = UDP-N-acetyl-alpha-D-glucosamine + diphosphate. Its pathway is nucleotide-sugar biosynthesis; UDP-N-acetyl-alpha-D-glucosamine biosynthesis; N-acetyl-alpha-D-glucosamine 1-phosphate from alpha-D-glucosamine 6-phosphate (route II): step 2/2. It participates in nucleotide-sugar biosynthesis; UDP-N-acetyl-alpha-D-glucosamine biosynthesis; UDP-N-acetyl-alpha-D-glucosamine from N-acetyl-alpha-D-glucosamine 1-phosphate: step 1/1. The protein operates within bacterial outer membrane biogenesis; LPS lipid A biosynthesis. Functionally, catalyzes the last two sequential reactions in the de novo biosynthetic pathway for UDP-N-acetylglucosamine (UDP-GlcNAc). The C-terminal domain catalyzes the transfer of acetyl group from acetyl coenzyme A to glucosamine-1-phosphate (GlcN-1-P) to produce N-acetylglucosamine-1-phosphate (GlcNAc-1-P), which is converted into UDP-GlcNAc by the transfer of uridine 5-monophosphate (from uridine 5-triphosphate), a reaction catalyzed by the N-terminal domain. This is Bifunctional protein GlmU from Methylibium petroleiphilum (strain ATCC BAA-1232 / LMG 22953 / PM1).